The primary structure comprises 309 residues: 4-hydroxy-3-methylbut-2-enyl diphosphate reductase (309 aa).

C13 provides a ligand contact to [4Fe-4S] cluster. Residues H42 and H75 each coordinate (2E)-4-hydroxy-3-methylbut-2-enyl diphosphate. Residues H42 and H75 each coordinate dimethylallyl diphosphate. 2 residues coordinate isopentenyl diphosphate: H42 and H75. C97 contacts [4Fe-4S] cluster. Residue H125 coordinates (2E)-4-hydroxy-3-methylbut-2-enyl diphosphate. H125 is a dimethylallyl diphosphate binding site. Isopentenyl diphosphate is bound at residue H125. The active-site Proton donor is the E127. T165 contacts (2E)-4-hydroxy-3-methylbut-2-enyl diphosphate. C195 serves as a coordination point for [4Fe-4S] cluster. (2E)-4-hydroxy-3-methylbut-2-enyl diphosphate-binding residues include S223, S224, N225, and S267. Residues S223, S224, N225, and S267 each contribute to the dimethylallyl diphosphate site. Isopentenyl diphosphate contacts are provided by S223, S224, N225, and S267.

The protein belongs to the IspH family. Requires [4Fe-4S] cluster as cofactor.

The catalysed reaction is isopentenyl diphosphate + 2 oxidized [2Fe-2S]-[ferredoxin] + H2O = (2E)-4-hydroxy-3-methylbut-2-enyl diphosphate + 2 reduced [2Fe-2S]-[ferredoxin] + 2 H(+). It catalyses the reaction dimethylallyl diphosphate + 2 oxidized [2Fe-2S]-[ferredoxin] + H2O = (2E)-4-hydroxy-3-methylbut-2-enyl diphosphate + 2 reduced [2Fe-2S]-[ferredoxin] + 2 H(+). It participates in isoprenoid biosynthesis; dimethylallyl diphosphate biosynthesis; dimethylallyl diphosphate from (2E)-4-hydroxy-3-methylbutenyl diphosphate: step 1/1. Its pathway is isoprenoid biosynthesis; isopentenyl diphosphate biosynthesis via DXP pathway; isopentenyl diphosphate from 1-deoxy-D-xylulose 5-phosphate: step 6/6. Its function is as follows. Catalyzes the conversion of 1-hydroxy-2-methyl-2-(E)-butenyl 4-diphosphate (HMBPP) into a mixture of isopentenyl diphosphate (IPP) and dimethylallyl diphosphate (DMAPP). Acts in the terminal step of the DOXP/MEP pathway for isoprenoid precursor biosynthesis. In Chlamydia caviae (strain ATCC VR-813 / DSM 19441 / 03DC25 / GPIC) (Chlamydophila caviae), this protein is 4-hydroxy-3-methylbut-2-enyl diphosphate reductase.